Here is a 181-residue protein sequence, read N- to C-terminus: Heavy metal-associated isoprenylated plant protein 46 (181 aa).

Residues 2 to 71 enclose the HMA domain; that stretch reads KQKILIRVTM…KVAFAELVSV (70 aa). A disordered region spans residues 74 to 121; that stretch reads VEPPKKEDEKKGGDGKGAEGKGGDQKGGDKKGPDDKEPPEPKPVPCYP. Over residues 75–113 the composition is skewed to basic and acidic residues; sequence EPPKKEDEKKGGDGKGAEGKGGDQKGGDKKGPDDKEPPE. Cys178 is modified (cysteine methyl ester). The S-farnesyl cysteine moiety is linked to residue Cys178. Positions 179–181 are cleaved as a propeptide — removed in mature form; the sequence is KIM.

The protein belongs to the HIPP family.

Probable heavy-metal-binding protein. In Arabidopsis thaliana (Mouse-ear cress), this protein is Heavy metal-associated isoprenylated plant protein 46.